Reading from the N-terminus, the 499-residue chain is Glutamyl-tRNA(Gln) amidotransferase subunit B, chloroplastic/mitochondrial (499 aa).

The protein belongs to the GatB/GatE family. GatB subfamily. As to quaternary structure, subunit of the heterotrimeric GatCAB amidotransferase (AdT) complex, composed of A, B and C subunits.

It localises to the mitochondrion. The protein resides in the plastid. Its subcellular location is the chloroplast. It carries out the reaction L-glutamyl-tRNA(Gln) + L-glutamine + ATP + H2O = L-glutaminyl-tRNA(Gln) + L-glutamate + ADP + phosphate + H(+). Functionally, allows the formation of correctly charged Gln-tRNA(Gln) through the transamidation of misacylated Glu-tRNA(Gln) in chloroplasts and mitochondria. The reaction takes place in the presence of glutamine and ATP through an activated gamma-phospho-Glu-tRNA(Gln). The protein is Glutamyl-tRNA(Gln) amidotransferase subunit B, chloroplastic/mitochondrial of Ostreococcus lucimarinus (strain CCE9901).